A 118-amino-acid chain; its full sequence is MARIAGVNIPENKHTVISLTYIFGIGRTRAESICATTGIEQTAKVRELTGEQLDAIRGEVAKFSTEGDLRREINMNIKRLMDLGCYRGIRHRRGLPLRGQRTKTNARTRKGPRKPIRK.

The tract at residues 94-118 (GLPLRGQRTKTNARTRKGPRKPIRK) is disordered.

Belongs to the universal ribosomal protein uS13 family. Part of the 30S ribosomal subunit. Forms a loose heterodimer with protein S19. Forms two bridges to the 50S subunit in the 70S ribosome.

Located at the top of the head of the 30S subunit, it contacts several helices of the 16S rRNA. In the 70S ribosome it contacts the 23S rRNA (bridge B1a) and protein L5 of the 50S subunit (bridge B1b), connecting the 2 subunits; these bridges are implicated in subunit movement. Contacts the tRNAs in the A and P-sites. The protein is Small ribosomal subunit protein uS13 of Alcanivorax borkumensis (strain ATCC 700651 / DSM 11573 / NCIMB 13689 / SK2).